Consider the following 452-residue polypeptide: tRNA modification GTPase MnmE (452 aa).

Arginine 23, glutamate 80, and lysine 119 together coordinate (6S)-5-formyl-5,6,7,8-tetrahydrofolate. Residues 215 to 374 enclose the TrmE-type G domain; it reads GIWIALVGQP…LQQGLLEMIG (160 aa). Position 225 (asparagine 225) interacts with K(+). GTP contacts are provided by residues 225–230, 244–250, and 269–272; these read NVGKSS, TEVPGTT, and DTAG. Serine 229 provides a ligand contact to Mg(2+). K(+) is bound by residues threonine 244, valine 246, and threonine 249. Threonine 250 contacts Mg(2+). Residue lysine 452 participates in (6S)-5-formyl-5,6,7,8-tetrahydrofolate binding.

Belongs to the TRAFAC class TrmE-Era-EngA-EngB-Septin-like GTPase superfamily. TrmE GTPase family. In terms of assembly, homodimer. Heterotetramer of two MnmE and two MnmG subunits. Requires K(+) as cofactor.

It localises to the cytoplasm. Its function is as follows. Exhibits a very high intrinsic GTPase hydrolysis rate. Involved in the addition of a carboxymethylaminomethyl (cmnm) group at the wobble position (U34) of certain tRNAs, forming tRNA-cmnm(5)s(2)U34. In Nitrosospira multiformis (strain ATCC 25196 / NCIMB 11849 / C 71), this protein is tRNA modification GTPase MnmE.